The sequence spans 549 residues: DNA ligase 1 (549 aa).

Residue glutamate 212 participates in ATP binding. Lysine 214 (N6-AMP-lysine intermediate) is an active-site residue. The ATP site is built by arginine 219, arginine 234, glutamate 264, phenylalanine 310, arginine 387, and lysine 393.

It belongs to the ATP-dependent DNA ligase family. Requires Mg(2+) as cofactor.

The catalysed reaction is ATP + (deoxyribonucleotide)n-3'-hydroxyl + 5'-phospho-(deoxyribonucleotide)m = (deoxyribonucleotide)n+m + AMP + diphosphate.. DNA ligase that seals nicks in double-stranded DNA during DNA replication, DNA recombination and DNA repair. The protein is DNA ligase 1 of Methanosarcina barkeri (strain Fusaro / DSM 804).